A 138-amino-acid polypeptide reads, in one-letter code: MKRYIALDIGDVRIGVARSDIMGIIASPLETINRKKVKSVKRIAEICKENDTNLVVVGIPKSLDGEEKRQAEKVREYIEKLKKEIENLEIIEVDERFSTVIADNILKELNKNGAIEKRKVVDKVAASIILQTYLDMKK.

This sequence belongs to the YqgF nuclease family.

The protein localises to the cytoplasm. Its function is as follows. Could be a nuclease involved in processing of the 5'-end of pre-16S rRNA. This Fusobacterium nucleatum subsp. nucleatum (strain ATCC 25586 / DSM 15643 / BCRC 10681 / CIP 101130 / JCM 8532 / KCTC 2640 / LMG 13131 / VPI 4355) protein is Putative pre-16S rRNA nuclease.